Consider the following 383-residue polypeptide: uncharacterized protein (383 aa).

The protein belongs to the peptidase M20 family.

This is an uncharacterized protein from Staphylococcus epidermidis (strain ATCC 35984 / DSM 28319 / BCRC 17069 / CCUG 31568 / BM 3577 / RP62A).